Here is a 294-residue protein sequence, read N- to C-terminus: 4-hydroxy-tetrahydrodipicolinate synthase (294 aa).

Thr-45 provides a ligand contact to pyruvate. Tyr-133 functions as the Proton donor/acceptor in the catalytic mechanism. Lys-162 (schiff-base intermediate with substrate) is an active-site residue. Ile-204 lines the pyruvate pocket.

The protein belongs to the DapA family. Homotetramer; dimer of dimers.

It is found in the cytoplasm. It catalyses the reaction L-aspartate 4-semialdehyde + pyruvate = (2S,4S)-4-hydroxy-2,3,4,5-tetrahydrodipicolinate + H2O + H(+). The protein operates within amino-acid biosynthesis; L-lysine biosynthesis via DAP pathway; (S)-tetrahydrodipicolinate from L-aspartate: step 3/4. Its activity is regulated as follows. Is allosterically regulated by the feedback inhibitor (S)-lysine. Its function is as follows. Catalyzes the condensation of (S)-aspartate-beta-semialdehyde [(S)-ASA] and pyruvate to 4-hydroxy-tetrahydrodipicolinate (HTPA). In Agrobacterium fabrum (strain C58 / ATCC 33970) (Agrobacterium tumefaciens (strain C58)), this protein is 4-hydroxy-tetrahydrodipicolinate synthase.